The primary structure comprises 275 residues: 4-diphosphocytidyl-2-C-methyl-D-erythritol kinase (275 aa).

K14 is an active-site residue. 98-108 (PMGAGLGGGSS) is an ATP binding site. The active site involves D140.

It belongs to the GHMP kinase family. IspE subfamily.

It catalyses the reaction 4-CDP-2-C-methyl-D-erythritol + ATP = 4-CDP-2-C-methyl-D-erythritol 2-phosphate + ADP + H(+). It participates in isoprenoid biosynthesis; isopentenyl diphosphate biosynthesis via DXP pathway; isopentenyl diphosphate from 1-deoxy-D-xylulose 5-phosphate: step 3/6. In terms of biological role, catalyzes the phosphorylation of the position 2 hydroxy group of 4-diphosphocytidyl-2C-methyl-D-erythritol. In Francisella philomiragia subsp. philomiragia (strain ATCC 25017 / CCUG 19701 / FSC 153 / O#319-036), this protein is 4-diphosphocytidyl-2-C-methyl-D-erythritol kinase.